A 124-amino-acid chain; its full sequence is V-type proton ATPase subunit F 1 (124 aa).

The protein belongs to the V-ATPase F subunit family. As to quaternary structure, V-ATPase is a heteromultimeric enzyme made up of two complexes: the ATP-hydrolytic V1 complex and the proton translocation V0 complex. The V1 complex consists of three catalytic AB heterodimers that form a heterohexamer, three peripheral stalks each consisting of EG heterodimers, one central rotor including subunits D and F, and the regulatory subunits C and H. The proton translocation complex V0 consists of the proton transport subunit a, a ring of proteolipid subunits c9c'', rotary subunit d, subunits e and f, and the accessory subunits VhaAC45 and ATP6AP2.

Subunit of the V1 complex of vacuolar(H+)-ATPase (V-ATPase), a multisubunit enzyme composed of a peripheral complex (V1) that hydrolyzes ATP and a membrane integral complex (V0) that translocates protons. V-ATPase is responsible for acidifying and maintaining the pH of intracellular compartments and in some cell types, is targeted to the plasma membrane, where it is responsible for acidifying the extracellular environment. The chain is V-type proton ATPase subunit F 1 (Vha14) from Drosophila pseudoobscura pseudoobscura (Fruit fly).